The following is a 144-amino-acid chain: Giant hemoglobin AIII chain (144 aa).

One can recognise a Globin domain in the interval Glu-2–Asn-144. A heme b-binding site is contributed by His-95.

It belongs to the globin family. As to quaternary structure, giant hemoglobin is composed of four heme-containing chains (AI to AIV), and two linker chains (AV and AVI).

The polypeptide is Giant hemoglobin AIII chain (Lamellibrachia sp. (Deep-sea giant tube worm)).